Reading from the N-terminus, the 157-residue chain is Protein Smg homolog (157 aa).

It belongs to the Smg family.

The chain is Protein Smg homolog from Shewanella loihica (strain ATCC BAA-1088 / PV-4).